Reading from the N-terminus, the 283-residue chain is D-alanine aminotransferase (283 aa).

Tyr-32 lines the substrate pocket. Pyridoxal 5'-phosphate is bound at residue Arg-51. The substrate site is built by Arg-99 and His-101. Residue Lys-146 is the Proton acceptor of the active site. Lys-146 is modified (N6-(pyridoxal phosphate)lysine). Pyridoxal 5'-phosphate is bound at residue Glu-178.

This sequence belongs to the class-IV pyridoxal-phosphate-dependent aminotransferase family. In terms of assembly, homodimer. Pyridoxal 5'-phosphate serves as cofactor.

The catalysed reaction is D-alanine + 2-oxoglutarate = D-glutamate + pyruvate. Its function is as follows. Acts on the D-isomers of alanine, leucine, aspartate, glutamate, aminobutyrate, norvaline and asparagine. The enzyme transfers an amino group from a substrate D-amino acid to the pyridoxal phosphate cofactor to form pyridoxamine and an alpha-keto acid in the first half-reaction. The second half-reaction is the reverse of the first, transferring the amino group from the pyridoxamine to a second alpha-keto acid to form the product D-amino acid via a ping-pong mechanism. This is an important process in the formation of D-alanine and D-glutamate, which are essential bacterial cell wall components. The chain is D-alanine aminotransferase (dat) from Lysinibacillus sphaericus (Bacillus sphaericus).